A 406-amino-acid chain; its full sequence is Digeranylgeranylglycerophospholipid reductase 2 (406 aa).

FAD contacts are provided by Gly-15, Glu-34, Cys-45, Ala-46, Gly-48, Arg-99, Ala-123, Asp-279, Gly-291, and Ile-292.

Belongs to the geranylgeranyl reductase family. DGGGPL reductase subfamily. Requires FAD as cofactor.

The enzyme catalyses a 2,3-bis-O-phytanyl-sn-glycerol 1-phospholipid + 8 oxidized 2[4Fe-4S]-[ferredoxin] = a 2,3-bis-O-(geranylgeranyl)-sn-glycerol 1-phospholipid + 8 reduced 2[4Fe-4S]-[ferredoxin] + 16 H(+). The catalysed reaction is 2,3-bis-O-(phytanyl)-sn-glycerol 1-phosphate + 8 oxidized 2[4Fe-4S]-[ferredoxin] = 2,3-bis-O-(geranylgeranyl)-sn-glycerol 1-phosphate + 8 reduced 2[4Fe-4S]-[ferredoxin] + 16 H(+). It carries out the reaction a 2,3-bis-O-phytanyl-sn-glycerol 1-phospholipid + 8 A = a 2,3-bis-O-(geranylgeranyl)-sn-glycerol 1-phospholipid + 8 AH2. It catalyses the reaction CDP-2,3-bis-O-(geranylgeranyl)-sn-glycerol + 8 AH2 = CDP-2,3-bis-O-(phytanyl)-sn-glycerol + 8 A. The enzyme catalyses archaetidylserine + 8 AH2 = 2,3-bis-O-phytanyl-sn-glycero-3-phospho-L-serine + 8 A. It participates in membrane lipid metabolism; glycerophospholipid metabolism. Is involved in the reduction of 2,3-digeranylgeranylglycerophospholipids (unsaturated archaeols) into 2,3-diphytanylglycerophospholipids (saturated archaeols) in the biosynthesis of archaeal membrane lipids. Catalyzes the formation of archaetidic acid (2,3-di-O-phytanyl-sn-glyceryl phosphate) from 2,3-di-O-geranylgeranylglyceryl phosphate (DGGGP) via the hydrogenation of each double bond of the isoprenoid chains. Is also probably able to reduce double bonds of geranyl groups in CDP-2,3-bis-O-(geranylgeranyl)-sn-glycerol and archaetidylserine, thus acting at various stages in the biosynthesis of archaeal membrane lipids. This Methanococcoides burtonii (strain DSM 6242 / NBRC 107633 / OCM 468 / ACE-M) protein is Digeranylgeranylglycerophospholipid reductase 2.